The primary structure comprises 469 residues: MFSEQAAQRAHTLLAPPSASNATFARVPVATYTNSSQPFRLGERSFNRQYAHIYATRLIQMRPFLVSRAQQHWGSRVEVKKLCELQPGEQCCVVGTLFKAMSLQPSILREISEEHNLVPQPPRSKYIHPDDELVLEDELQRIKLKGTIDVSKLVTGTVLAVLGSAKDDGRFQVEDHCFADLAPQKPVPPLDTDRFVLLVSGLGLGGGGGESLLGTQLLVDVVTGQLGDEGEQCSAAHVSRVILAGNLLSHNTQSRDSINKAKYLTKKTQAASVEAVKMLDEILLQLSASVPVDVMPGEFDPTNYTLPQQPLHPCMFPLATAYSTLQLVTNPYQATIDGVRFLGTSGQNVSDIFRYSSMEDHLEILEWTLRVRHISPTAPDTLGCYPFYKTDPFIFPECPHVYFCGNTPSFGSKIIRGPEDQVVLLVAVPDFSSTQTACLVNLRSLACQPISFAGFGAEQEDLEGLGLGP.

The residue at position 1 (Met1) is an N-acetylmethionine. Residue Ser257 is modified to Phosphoserine.

It belongs to the DNA polymerase delta/II small subunit family. Component of both the DNA polymerase delta and DNA polymerase zeta complexes. Component of the tetrameric DNA polymerase delta complex (Pol-delta4), which consists of POLD1/p125, POLD2/p50, POLD3/p66/p68 and POLD4/p12, with POLD1 bearing DNA polymerase and 3' to 5' proofreading exonuclease activities. Within Pol-delta4, directly interacts with POLD1, POLD3 and POLD4. Following stress caused by DNA damaging agents or by replication stress, POLD4 is degraded and Pol-delta4 is converted into a trimeric form of the complex (Pol-delta3), which consists of POLD1, POLD2 and POLD3. Pol-delta3 is the major form occurring at S phase replication sites, as well as DNA damage sites. Also observed as a dimeric complex with POLD2 (Pol-delta2 complex). Pol-delta2 is relatively insensitive to the PCNA stimulation (2-5-fold) compared to Pol-delta4 that is stimulated by over 50-fold. Contrary to the other components of Pol-delta4, does not directly interact with PCNA. As POLD1 and POLD4, directly interacts with WRNIP1; this interaction stimulates DNA polymerase delta-mediated DNA synthesis, independently of the presence of PCNA. This stimulation may be due predominantly to an increase of initiation frequency and also to increased processivity. Directly interacts with POLDIP2 and POLDIP3. Directly interacts with KCTD13/PDIP1; in the presence of PCNA, this interaction may stimulate DNA polymerase activity. Component of the tetrameric Pol-zeta complex (Pol-zeta4), which consists of REV3L, MAD2L2, POLD2 and POLD3, with REV3L bearing DNA polymerase catalytic activity. Interacts with KCTD10.

It localises to the nucleus. Accessory component of both the DNA polymerase delta complex and the DNA polymerase zeta complex. As a component of the trimeric and tetrameric DNA polymerase delta complexes (Pol-delta3 and Pol-delta4, respectively), plays a role in high fidelity genome replication, including in lagging strand synthesis, and repair. Pol-delta3 and Pol-delta4 are characterized by the absence or the presence of POLD4. They exhibit differences in catalytic activity. Most notably, Pol-delta3 shows higher proofreading activity than Pol-delta4. Although both Pol-delta3 and Pol-delta4 process Okazaki fragments in vitro, Pol-delta3 may also be better suited to fulfill this task, exhibiting near-absence of strand displacement activity compared to Pol-delta4 and stalling on encounter with the 5'-blocking oligonucleotides. Pol-delta3 idling process may avoid the formation of a gap, while maintaining a nick that can be readily ligated. Along with DNA polymerase kappa, DNA polymerase delta carries out approximately half of nucleotide excision repair (NER) synthesis following UV irradiation. Under conditions of DNA replication stress, required for the repair of broken replication forks through break-induced replication (BIR). Involved in the translesion synthesis (TLS) of templates carrying O6-methylguanine or abasic sites performed by Pol-delta4, independently of DNA polymerase zeta (REV3L) or eta (POLH). Facilitates abasic site bypass by DNA polymerase delta by promoting extension from the nucleotide inserted opposite the lesion. Also involved in TLS as a component of the DNA polymerase zeta complex. Along with POLD3, dramatically increases the efficiency and processivity of DNA synthesis of the DNA polymerase zeta complex compared to the minimal zeta complex, consisting of only REV3L and REV7. This chain is DNA polymerase delta subunit 2 (Pold2), found in Mus musculus (Mouse).